Consider the following 607-residue polypeptide: tRNA uridine 5-carboxymethylaminomethyl modification enzyme MnmG (607 aa).

Residues glycine 11–glycine 16, valine 123, and serine 178 contribute to the FAD site. Residue glycine 270–phenylalanine 284 participates in NAD(+) binding. Glutamine 367 is an FAD binding site.

Belongs to the MnmG family. As to quaternary structure, homodimer. Heterotetramer of two MnmE and two MnmG subunits. FAD is required as a cofactor.

It is found in the cytoplasm. Its function is as follows. NAD-binding protein involved in the addition of a carboxymethylaminomethyl (cmnm) group at the wobble position (U34) of certain tRNAs, forming tRNA-cmnm(5)s(2)U34. The protein is tRNA uridine 5-carboxymethylaminomethyl modification enzyme MnmG of Metamycoplasma arthritidis (strain 158L3-1) (Mycoplasma arthritidis).